Here is a 307-residue protein sequence, read N- to C-terminus: tRNA dimethylallyltransferase 2 (307 aa).

Residue 11–18 (GPTASGKT) coordinates ATP. Substrate is bound at residue 13 to 18 (TASGKT). Residues 36-39 (DSRQ) form an interaction with substrate tRNA region.

The protein belongs to the IPP transferase family. In terms of assembly, monomer. Requires Mg(2+) as cofactor.

It carries out the reaction adenosine(37) in tRNA + dimethylallyl diphosphate = N(6)-dimethylallyladenosine(37) in tRNA + diphosphate. Its function is as follows. Catalyzes the transfer of a dimethylallyl group onto the adenine at position 37 in tRNAs that read codons beginning with uridine, leading to the formation of N6-(dimethylallyl)adenosine (i(6)A). The protein is tRNA dimethylallyltransferase 2 of Phocaeicola vulgatus (strain ATCC 8482 / DSM 1447 / JCM 5826 / CCUG 4940 / NBRC 14291 / NCTC 11154) (Bacteroides vulgatus).